We begin with the raw amino-acid sequence, 287 residues long: Nucleotide-binding protein Hhal_2130 (287 aa).

11 to 18 (GLSGSGKS) is a binding site for ATP. 63-66 (DARN) is a binding site for GTP.

It belongs to the RapZ-like family.

Displays ATPase and GTPase activities. This Halorhodospira halophila (strain DSM 244 / SL1) (Ectothiorhodospira halophila (strain DSM 244 / SL1)) protein is Nucleotide-binding protein Hhal_2130.